The primary structure comprises 453 residues: Potassium/proton antiporter CemA (453 aa).

4 helical membrane passes run 235–255, 328–348, 378–398, and 414–434; these read YMAC…IIFL, ICTI…ACLL, ILLL…EIII, and VSCF…YWIF.

This sequence belongs to the CemA family.

The protein resides in the plastid. Its subcellular location is the chloroplast inner membrane. The enzyme catalyses K(+)(in) + H(+)(out) = K(+)(out) + H(+)(in). Contributes to K(+)/H(+) antiport activity by supporting proton efflux to control proton extrusion and homeostasis in chloroplasts in a light-dependent manner to modulate photosynthesis. Prevents excessive induction of non-photochemical quenching (NPQ) under continuous-light conditions. Indirectly promotes efficient inorganic carbon uptake into chloroplasts. The chain is Potassium/proton antiporter CemA from Zygnema circumcarinatum (Green alga).